Here is a 565-residue protein sequence, read N- to C-terminus: NAD-dependent malic enzyme (565 aa).

Tyr-104 (proton donor) is an active-site residue. Arg-157 is an NAD(+) binding site. Lys-175 acts as the Proton acceptor in catalysis. Positions 246, 247, and 270 each coordinate a divalent metal cation. 2 residues coordinate NAD(+): Asp-270 and Asn-418.

Belongs to the malic enzymes family. In terms of assembly, homotetramer. It depends on Mg(2+) as a cofactor. Mn(2+) serves as cofactor.

The catalysed reaction is (S)-malate + NAD(+) = pyruvate + CO2 + NADH. It carries out the reaction oxaloacetate + H(+) = pyruvate + CO2. This Escherichia coli O127:H6 (strain E2348/69 / EPEC) protein is NAD-dependent malic enzyme.